A 357-amino-acid chain; its full sequence is Trans-resveratrol di-O-methyltransferase (357 aa).

Positions 200, 223, 243, 244, and 257 each coordinate S-adenosyl-L-methionine. Catalysis depends on His261, which acts as the Proton acceptor.

It belongs to the class I-like SAM-binding methyltransferase superfamily. Cation-independent O-methyltransferase family. COMT subfamily.

The catalysed reaction is trans-resveratrol + 2 S-adenosyl-L-methionine = pterostilbene + 2 S-adenosyl-L-homocysteine + 2 H(+). Functionally, catalyzes the biosynthesis of pterostilbene from resveratrol. Pterostilbene has both antifungal and pharmacological properties. Also has activity toward resveratrol monomethyl ether (RME). This is Trans-resveratrol di-O-methyltransferase (ROMT) from Vitis vinifera (Grape).